A 349-amino-acid chain; its full sequence is ATPase GET3 (349 aa).

26–33 (KGGVGKTT) lines the ATP pocket. Asp57 is a catalytic residue. ATP-binding residues include Glu243 and Asn270. Zn(2+) contacts are provided by Cys280 and Cys283.

Belongs to the arsA ATPase family. As to quaternary structure, homodimer. Component of the Golgi to ER traffic (GET) complex, which is composed of GET1, GET2 and GET3. Within the complex, GET1 and GET2 form a heterotetramer which is stabilized by phosphatidylinositol binding and which binds to the GET3 homodimer. Interacts with the chloride channel protein GEF1.

Its subcellular location is the cytoplasm. It is found in the endoplasmic reticulum. It localises to the golgi apparatus. Its function is as follows. ATPase required for the post-translational delivery of tail-anchored (TA) proteins to the endoplasmic reticulum. Recognizes and selectively binds the transmembrane domain of TA proteins in the cytosol. This complex then targets to the endoplasmic reticulum by membrane-bound receptors GET1 and GET2, where the tail-anchored protein is released for insertion. This process is regulated by ATP binding and hydrolysis. ATP binding drives the homodimer towards the closed dimer state, facilitating recognition of newly synthesized TA membrane proteins. ATP hydrolysis is required for insertion. Subsequently, the homodimer reverts towards the open dimer state, lowering its affinity for the GET1-GET2 receptor, and returning it to the cytosol to initiate a new round of targeting. Cooperates with the HDEL receptor ERD2 to mediate the ATP-dependent retrieval of resident ER proteins that contain a C-terminal H-D-E-L retention signal from the Golgi to the ER. Involved in low-level resistance to the oxyanions arsenite and arsenate, and in heat tolerance. In Clavispora lusitaniae (strain ATCC 42720) (Yeast), this protein is ATPase GET3.